The following is a 79-amino-acid chain: Submaxillary gland androgen-regulated protein 3B (79 aa).

A signal peptide spans 1 to 22 (MKSLTWILGLWALAACFTPGES). Residues 19-79 (PGESQRGPRG…GIFPPPPPQP (61 aa)) form a disordered region. Pyrrolidone carboxylic acid is present on Gln23. Over residues 28–79 (GPYPPGPLAPPQPFGPGFVPPPPPPPYGPGRIPPPPPAPYGPGIFPPPPPQP) the composition is skewed to pro residues.

This sequence belongs to the PROL1/PROL3 family. P-A and D1A are probably degradation products of P-B. In terms of tissue distribution, secreted into saliva by submaxillary gland. Not expressed in heart, brain, lung, liver, skeletal muscle, Kidney, pancreas or placenta.

It is found in the secreted. The polypeptide is Submaxillary gland androgen-regulated protein 3B (SMR3B) (Homo sapiens (Human)).